A 97-amino-acid polypeptide reads, in one-letter code: uncharacterized protein (97 aa).

This is an uncharacterized protein from Escherichia coli O157:H7.